Consider the following 154-residue polypeptide: tRNA (cytidine(34)-2'-O)-methyltransferase (154 aa).

Leu-78, Gly-100, Leu-122, and Ser-130 together coordinate S-adenosyl-L-methionine.

This sequence belongs to the class IV-like SAM-binding methyltransferase superfamily. RNA methyltransferase TrmH family. TrmL subfamily. Homodimer.

Its subcellular location is the cytoplasm. The catalysed reaction is cytidine(34) in tRNA + S-adenosyl-L-methionine = 2'-O-methylcytidine(34) in tRNA + S-adenosyl-L-homocysteine + H(+). The enzyme catalyses 5-carboxymethylaminomethyluridine(34) in tRNA(Leu) + S-adenosyl-L-methionine = 5-carboxymethylaminomethyl-2'-O-methyluridine(34) in tRNA(Leu) + S-adenosyl-L-homocysteine + H(+). Methylates the ribose at the nucleotide 34 wobble position in the two leucyl isoacceptors tRNA(Leu)(CmAA) and tRNA(Leu)(cmnm5UmAA). Catalyzes the methyl transfer from S-adenosyl-L-methionine to the 2'-OH of the wobble nucleotide. The chain is tRNA (cytidine(34)-2'-O)-methyltransferase from Methylovorus glucosotrophus (strain SIP3-4).